Consider the following 98-residue polypeptide: Integration host factor subunit alpha (98 aa).

The interval 51 to 71 (NFDLRDKNERPGRNPKTGEDI) is disordered. Over residues 53 to 69 (DLRDKNERPGRNPKTGE) the composition is skewed to basic and acidic residues.

It belongs to the bacterial histone-like protein family. Heterodimer of an alpha and a beta chain.

This protein is one of the two subunits of integration host factor, a specific DNA-binding protein that functions in genetic recombination as well as in transcriptional and translational control. The chain is Integration host factor subunit alpha from Vibrio cholerae serotype O1 (strain ATCC 39541 / Classical Ogawa 395 / O395).